The following is a 623-amino-acid chain: Glutathione import ATP-binding protein GsiA (623 aa).

ABC transporter domains follow at residues 15-269 and 314-564; these read VENL…RALL and LRVR…RKLL. Residues 49-56 and 357-364 contribute to the ATP site; these read GESGSGKS.

This sequence belongs to the ABC transporter superfamily. Glutathione importer (TC 3.A.1.5.11) family. In terms of assembly, the complex is composed of two ATP-binding proteins (GsiA), two transmembrane proteins (GsiC and GsiD) and a solute-binding protein (GsiB).

It localises to the cell inner membrane. It carries out the reaction glutathione(out) + ATP + H2O = glutathione(in) + ADP + phosphate + H(+). Its function is as follows. Part of the ABC transporter complex GsiABCD involved in glutathione import. Responsible for energy coupling to the transport system. The polypeptide is Glutathione import ATP-binding protein GsiA (Escherichia coli O6:H1 (strain CFT073 / ATCC 700928 / UPEC)).